Here is a 361-residue protein sequence, read N- to C-terminus: Tegument protein UL51 homolog (361 aa).

A lipid anchor (S-palmitoyl cysteine; by host) is attached at Cys8. Residues 251 to 299 (GDEEDEVTVMSPSPEPVQQQPPVEPVQQQPQGRGSHRRRYKESAPQETL) form a disordered region. Over residues 266 to 281 (PVQQQPPVEPVQQQPQ) the composition is skewed to low complexity.

This sequence belongs to the herpesviridae UL51 family. As to quaternary structure, oligomerizes. Interacts with UL103; this interaction mediates UL103 incorporation to virions. Post-translationally, phosphorylated. In terms of processing, palmitoylation is necessary for Golgi localization.

Its subcellular location is the virion tegument. It is found in the host cytoplasm. It localises to the host Golgi apparatus. Plays several roles during the time course of infection, including egress of virus particles from the perinuclear space and secondary envelopment of cytoplasmic capsids that bud into specific trans-Golgi network (TGN)-derived membranes. The protein is Tegument protein UL51 homolog (UL71) of Homo sapiens (Human).